We begin with the raw amino-acid sequence, 305 residues long: GMP synthase [glutamine-hydrolyzing] subunit B (305 aa).

Residues 2–184 enclose the GMPS ATP-PPase domain; that stretch reads VKPEKFIPKA…LKLPDEICER (183 aa). Position 29-35 (29-35) interacts with ATP; it reads SGGVDSS.

As to quaternary structure, heterodimer composed of a glutamine amidotransferase subunit (A) and a GMP-binding subunit (B).

The enzyme catalyses XMP + L-glutamine + ATP + H2O = GMP + L-glutamate + AMP + diphosphate + 2 H(+). It functions in the pathway purine metabolism; GMP biosynthesis; GMP from XMP (L-Gln route): step 1/1. Functionally, catalyzes the synthesis of GMP from XMP. This chain is GMP synthase [glutamine-hydrolyzing] subunit B, found in Methanosarcina barkeri (strain Fusaro / DSM 804).